The following is a 149-amino-acid chain: Probable microsomal glutathione S-transferase (149 aa).

2 helical membrane-spanning segments follow: residues 7–27 (SIFP…IGLW) and 123–143 (LSHI…GSSL).

This sequence belongs to the MAPEG family.

Its subcellular location is the membrane. It carries out the reaction RX + glutathione = an S-substituted glutathione + a halide anion + H(+). May perform the conjugation of reduced glutathione to electrophiles. The chain is Probable microsomal glutathione S-transferase (mgst) from Dictyostelium discoideum (Social amoeba).